Consider the following 508-residue polypeptide: Maturase K (508 aa).

The protein belongs to the intron maturase 2 family. MatK subfamily.

It localises to the plastid. It is found in the chloroplast. In terms of biological role, usually encoded in the trnK tRNA gene intron. Probably assists in splicing its own and other chloroplast group II introns. The polypeptide is Maturase K (Ranunculus glacialis (Glacier buttercup)).